The following is a 1071-amino-acid chain: Fused isobutyryl-CoA mutase (1071 aa).

Residues 12–149 form the B12-binding domain; it reads PVRFVTSAAL…QTCDVDLTGE (138 aa). Residue His-25 participates in adenosylcob(III)alamin binding. The interval 153 to 400 is GTPase chaperone MeaI; sequence VEAVLAGERT…YQHLLELLGA (248 aa). 203-208 lines the GTP pocket; that stretch reads GSGKSS. Mg(2+) is bound by residues Ser-207, Val-232, Asp-233, and Asp-246. Arg-249 contributes to the GTP binding site. Residues Glu-293 and Thr-294 each coordinate Mg(2+). 340–343 serves as a coordination point for GTP; that stretch reads NKFE. A linker region spans residues 401–558; that stretch reads RGLPVDEGVL…RSENLPGHFP (158 aa). The substrate site is built by Phe-566, Arg-601, Arg-707, Tyr-751, Ser-800, Arg-835, and Lys-840. 2 residues coordinate GTP: Glu-952 and Asn-1070.

The protein belongs to the IcmF family. Homodimer. Requires adenosylcob(III)alamin as cofactor. It depends on Mg(2+) as a cofactor.

The catalysed reaction is 2-methylpropanoyl-CoA = butanoyl-CoA. The enzyme catalyses GTP + H2O = GDP + phosphate + H(+). Catalyzes the reversible interconversion of isobutyryl-CoA and n-butyryl-CoA, using radical chemistry. Also exhibits GTPase activity, associated with its G-protein domain (MeaI) that functions as a chaperone that assists cofactor delivery and proper holo-enzyme assembly. Does not exhibit methylmalonyl-CoA mutase (MCM) activity. In Nocardia farcinica (strain IFM 10152), this protein is Fused isobutyryl-CoA mutase.